Consider the following 78-residue polypeptide: Small ribosomal subunit protein bS20 (78 aa).

The disordered stretch occupies residues 1–34 (MANIKSNLKRNKQNRARHTVVHSQTSAVKTQIKK). Residues 7–20 (NLKRNKQNRARHTV) show a composition bias toward basic residues. Over residues 21–34 (VHSQTSAVKTQIKK) the composition is skewed to polar residues.

This sequence belongs to the bacterial ribosomal protein bS20 family.

Functionally, binds directly to 16S ribosomal RNA. The polypeptide is Small ribosomal subunit protein bS20 (Malacoplasma penetrans (strain HF-2) (Mycoplasma penetrans)).